The sequence spans 85 residues: Small ribosomal subunit protein bS16 (85 aa).

It belongs to the bacterial ribosomal protein bS16 family.

The polypeptide is Small ribosomal subunit protein bS16 (Pseudomonas savastanoi pv. phaseolicola (strain 1448A / Race 6) (Pseudomonas syringae pv. phaseolicola (strain 1448A / Race 6))).